Reading from the N-terminus, the 502-residue chain is Lipoprotein LipO (502 aa).

The N-terminal stretch at 1–21 is a signal peptide; the sequence is MKIRMRKKWMALPLAAMMIAG. C22 carries N-palmitoyl cysteine lipidation. C22 carries the S-diacylglycerol cysteine lipid modification.

Its subcellular location is the cell membrane. This is Lipoprotein LipO (lipO) from Bacillus subtilis (strain 168).